An 872-amino-acid chain; its full sequence is Leucine--tRNA ligase (872 aa).

Residues 42–52 (PYPSGSLHMGH) carry the 'HIGH' region motif. A 'KMSKS' region motif is present at residues 634 to 638 (TMSKS). Residue lysine 637 participates in ATP binding.

This sequence belongs to the class-I aminoacyl-tRNA synthetase family.

Its subcellular location is the cytoplasm. The catalysed reaction is tRNA(Leu) + L-leucine + ATP = L-leucyl-tRNA(Leu) + AMP + diphosphate. In Nostoc sp. (strain PCC 7120 / SAG 25.82 / UTEX 2576), this protein is Leucine--tRNA ligase.